Consider the following 172-residue polypeptide: Small ribosomal subunit protein uS5 (172 aa).

The region spanning 16–79 (LKEKLVHINR…EDGKKNVVKV (64 aa)) is the S5 DRBM domain.

This sequence belongs to the universal ribosomal protein uS5 family. In terms of assembly, part of the 30S ribosomal subunit. Contacts proteins S4 and S8.

Its function is as follows. With S4 and S12 plays an important role in translational accuracy. In terms of biological role, located at the back of the 30S subunit body where it stabilizes the conformation of the head with respect to the body. The polypeptide is Small ribosomal subunit protein uS5 (Prosthecochloris aestuarii (strain DSM 271 / SK 413)).